Consider the following 174-residue polypeptide: ATP-dependent protease subunit HslV (174 aa).

The active site involves Thr2. Positions 159, 162, and 165 each coordinate Na(+).

Belongs to the peptidase T1B family. HslV subfamily. A double ring-shaped homohexamer of HslV is capped on each side by a ring-shaped HslU homohexamer. The assembly of the HslU/HslV complex is dependent on binding of ATP.

The protein resides in the cytoplasm. The enzyme catalyses ATP-dependent cleavage of peptide bonds with broad specificity.. Allosterically activated by HslU binding. Its function is as follows. Protease subunit of a proteasome-like degradation complex believed to be a general protein degrading machinery. In Lacticaseibacillus casei (strain BL23) (Lactobacillus casei), this protein is ATP-dependent protease subunit HslV.